A 233-amino-acid chain; its full sequence is Phosphoribosylformylglycinamidine synthase subunit PurQ (233 aa).

The 231-residue stretch at 3-233 (SAILVFPGIN…GLVEHLAKAA (231 aa)) folds into the Glutamine amidotransferase type-1 domain. The Nucleophile role is filled by Cys-87. Active-site residues include His-204 and Glu-206.

As to quaternary structure, part of the FGAM synthase complex composed of 1 PurL, 1 PurQ and 2 PurS subunits.

It localises to the cytoplasm. The catalysed reaction is N(2)-formyl-N(1)-(5-phospho-beta-D-ribosyl)glycinamide + L-glutamine + ATP + H2O = 2-formamido-N(1)-(5-O-phospho-beta-D-ribosyl)acetamidine + L-glutamate + ADP + phosphate + H(+). It carries out the reaction L-glutamine + H2O = L-glutamate + NH4(+). It functions in the pathway purine metabolism; IMP biosynthesis via de novo pathway; 5-amino-1-(5-phospho-D-ribosyl)imidazole from N(2)-formyl-N(1)-(5-phospho-D-ribosyl)glycinamide: step 1/2. Part of the phosphoribosylformylglycinamidine synthase complex involved in the purines biosynthetic pathway. Catalyzes the ATP-dependent conversion of formylglycinamide ribonucleotide (FGAR) and glutamine to yield formylglycinamidine ribonucleotide (FGAM) and glutamate. The FGAM synthase complex is composed of three subunits. PurQ produces an ammonia molecule by converting glutamine to glutamate. PurL transfers the ammonia molecule to FGAR to form FGAM in an ATP-dependent manner. PurS interacts with PurQ and PurL and is thought to assist in the transfer of the ammonia molecule from PurQ to PurL. The polypeptide is Phosphoribosylformylglycinamidine synthase subunit PurQ (Rhodopseudomonas palustris (strain BisB18)).